Here is a 1279-residue protein sequence, read N- to C-terminus: Mediator of DNA damage checkpoint protein 1 (1279 aa).

Residues 1-22 (MENTQVIDWDAEEEEETEISSG) form a disordered region. Positions 1-150 (MENTQVIDWD…PRSLLTIEKT (150 aa)) are interaction with CHEK2. The interval 2–222 (ENTQVIDWDA…SSPFGLGSDT (221 aa)) is interaction with the MRN complex. Position 4 is a phosphothreonine (T4). Acidic residues predominate over residues 9-18 (WDAEEEEETE). An FHA domain is found at 54–105 (NVVGRSPDCSVALPFPSISKQHAVIEISAWNKAPILQDCGSLNGTQIVKPPR). T146 bears the Phosphothreonine mark. 3 disordered regions span residues 156–394 (RSQN…EEVS), 409–634 (LWSG…KHAK), and 714–744 (ETSE…PVPT). Residues S168 and S176 each carry the phosphoserine modification. A compositionally biased stretch (polar residues) spans 179–192 (SVANGSRNTASPSA). Phosphoserine occurs at positions 198 and 220. T222 carries the phosphothreonine modification. The span at 264-277 (TKDKFKDTKMKEEA) shows a compositional bias: basic and acidic residues. Residues 278–292 (GSAGVPVGSVVEGSP) are compositionally biased toward low complexity. S298 carries the post-translational modification Phosphoserine. T300 carries the post-translational modification Phosphothreonine. Position 314 is a phosphoserine (S314). Phosphothreonine is present on T316. 2 positions are modified to phosphoserine: S350 and S354. Residue T356 is modified to Phosphothreonine. Phosphoserine is present on residues S372 and S380. The segment covering 381–393 (DTDEEERGEEEEV) has biased composition (acidic residues). A Phosphothreonine modification is found at T382. S394, S411, S421, S434, and S438 each carry phosphoserine. Positions 421-435 (SQPQVLVERSQSASG) are enriched in polar residues. T440 is modified (phosphothreonine). Residue S457 is modified to Phosphoserine. T466 carries the phosphothreonine modification. Phosphoserine is present on residues S488, S489, S550, S587, and S589. A compositionally biased stretch (polar residues) spans 545 to 561 (QEGSSSPVADIRMSQQP). Residues 620–634 (GREREAHVGGTKHAK) show a composition bias toward basic and acidic residues. S730 and S745 each carry phosphoserine. At K764 the chain carries N6-acetyllysine. A disordered region spans residues 772 to 1086 (QMMPDGKASG…TKPNQEAAAP (315 aa)). Phosphoserine is present on residues S793, S801, and S824. The span at 798-817 (ASASPQSLLTSQSQKQSTPQ) shows a compositional bias: low complexity. 3 stretches are compositionally biased toward polar residues: residues 862–889 (TCPT…STRT), 901–929 (QPST…TSVN), and 942–956 (PLTS…NLNP). A Phosphothreonine modification is found at T889. Phosphothreonine is present on T951. Residue K991 forms a Glycyl lysine isopeptide (Lys-Gly) (interchain with G-Cter in SUMO2) linkage. Over residues 994–1014 (STPAEPEPQSSASQSSGASEA) the composition is skewed to low complexity. Phosphoserine occurs at positions 1008, 1009, 1012, and 1016. A compositionally biased stretch (basic and acidic residues) spans 1032 to 1047 (VVKEEDPGEIQVKEEP). K1034 is covalently cross-linked (Glycyl lysine isopeptide (Lys-Gly) (interchain with G-Cter in SUMO1); alternate). K1034 participates in a covalent cross-link: Glycyl lysine isopeptide (Lys-Gly) (interchain with G-Cter in SUMO2); alternate. Position 1054 is a phosphothreonine (T1054). 2 consecutive BRCT domains span residues 1085–1163 (APKV…DYLV) and 1184–1275 (RERR…FVLS).

In terms of assembly, homodimer. Interacts with H2AX, which requires phosphorylation of H2AX on 'Ser-139'. Interacts with the MRN complex, composed of MRE11, RAD50, and NBN. Interacts with CHEK2, which requires ATM-mediated phosphorylation of 'Thr-68' within the FHA domain of CHEK2. Interacts constitutively with the BRCA1-BARD1 complex, SMC1A and TP53BP1. Interacts with ATM and FANCD2, and these interactions are reduced upon DNA damage. Also interacts with the PRKDC complex, composed of XRCC6/KU70, XRCC5/KU80 and PRKDC/XRCC7. This interaction may be required for PRKDC autophosphorylation, which is essential for DNA double strand break (DSB) repair. When phosphorylated by ATM, interacts with RNF8 (via FHA domain). Interacts with CEP164. When phosphorylated, interacts with APTX (via FHA-like domain). Interacts (when phosphorylated) with TOPBP1; promoting TOPBP1 localization to DNA damage sites during mitosis. Interacts (when phosphorylated) with NBN; promoting NBN and MRN complex localization to DNA damage sites. Phosphorylated upon exposure to ionizing radiation (IR), ultraviolet radiation (UV), and hydroxyurea (HU). Phosphorylation in response to IR requires ATM, NBN, and possibly CHEK2. Also phosphorylated during the G2/M phase of the cell cycle and during activation of the mitotic spindle checkpoint. Phosphorylation at Thr-4 by ATM stabilizes and enhances homodimerization via the FHA domain. Phosphorylated at Ser-168 and Ser-198 by CK2 in response to DNA damage during mitosis, promoting interaction with TOPBP1. Phosphorylated by CK2 in response to DNA damage, promoting interaction with NBN and recruitment of the MRN complex to DNA damage sites. In terms of processing, sumoylation at Lys-1034 by PIAS4 following DNA damage promotes ubiquitin-mediated degradation. Post-translationally, ubiquitinated by RNF4, leading to proteasomal degradation; undergoes 'Lys-48'-linked polyubiquitination.

Its subcellular location is the nucleus. The protein localises to the chromosome. Histone reader protein required for checkpoint-mediated cell cycle arrest in response to DNA damage within both the S phase and G2/M phases of the cell cycle. Specifically recognizes and binds histone H2AX phosphorylated at 'Ser-139', a marker of DNA damage, serving as a scaffold for the recruitment of DNA repair and signal transduction proteins to discrete foci of DNA damage sites. Also required for downstream events subsequent to the recruitment of these proteins. These include phosphorylation and activation of the ATM, CHEK1 and CHEK2 kinases, and stabilization of TP53/p53 and apoptosis. ATM and CHEK2 may also be activated independently by a parallel pathway mediated by TP53BP1. Required for chromosomal stability during mitosis by promoting recruitment of TOPBP1 to DNA double strand breaks (DSBs): TOPBP1 forms filamentous assemblies that bridge MDC1 and tether broken chromosomes during mitosis. Required for the repair of DSBs via homologous recombination by promoting recruitment of NBN component of the MRN complex to DSBs. The chain is Mediator of DNA damage checkpoint protein 1 (Mdc1) from Rattus norvegicus (Rat).